A 253-amino-acid chain; its full sequence is Phosphoadenosine 5'-phosphosulfate reductase (253 aa).

The Nucleophile; cysteine thiosulfonate intermediate role is filled by Cys-239.

It belongs to the PAPS reductase family. CysH subfamily.

Its subcellular location is the cytoplasm. The enzyme catalyses [thioredoxin]-disulfide + sulfite + adenosine 3',5'-bisphosphate + 2 H(+) = [thioredoxin]-dithiol + 3'-phosphoadenylyl sulfate. It participates in sulfur metabolism; hydrogen sulfide biosynthesis; sulfite from sulfate: step 3/3. Functionally, catalyzes the formation of sulfite from phosphoadenosine 5'-phosphosulfate (PAPS) using thioredoxin as an electron donor. In Aliivibrio fischeri (strain MJ11) (Vibrio fischeri), this protein is Phosphoadenosine 5'-phosphosulfate reductase.